Consider the following 218-residue polypeptide: MGQKINPLGFRLGTTQSHHSLWFAQPKKYSEGLQEDKKIRDCIKNYVQKNTRLSSGVEGIARIEIQKRLDLIQVIIYMGFPKLLIEDKPRKLEELQMNVQKELNCMNRKLNIAITRIGNPYGHPNILAEFIAGQLKNRVSFRKAMKKAIELTEQADTKGIQIQIAGRIDGKEIARVEWIREGRVPLQTIGAKIEYCSYRVRTIYGVLGIKIWIFIDEE.

The 76-residue stretch at 43–118 (IKNYVQKNTR…KLNIAITRIG (76 aa)) folds into the KH type-2 domain.

It belongs to the universal ribosomal protein uS3 family. As to quaternary structure, part of the 30S ribosomal subunit.

The protein resides in the plastid. It localises to the chloroplast. The protein is Small ribosomal subunit protein uS3c (rps3) of Gossypium barbadense (Sea Island cotton).